Reading from the N-terminus, the 117-residue chain is Movement and RNA silencing protein (117 aa).

A helical membrane pass occupies residues 15-35; it reads FLFFGAIFIAITILYILLVLL. Residues 83 to 117 form a disordered region; it reads RDQEPAVIPHVSQVIPSQPNRRDDQGRRGNAGPMF.

The protein resides in the host cell membrane. Transports viral genome to neighboring plant cells directly through plasmosdesmata, without any budding. The movement protein allows efficient cell to cell propagation, by bypassing the host cell wall barrier. Begomovirus genome is shuttled out of nucleus by Nuclear shuttle protein (NSP) and the movement protein transports the DNA-NSP complex to cell plasmodesmata and facilitates further movement across the cell wall. Acts as a suppressor of RNA-mediated gene silencing, also known as post-transcriptional gene silencing (PTGS), a mechanism of plant viral defense that limits the accumulation of viral RNAs. The sequence is that of Movement and RNA silencing protein (DNA-M) from Banana bunchy top virus (isolate Autralia) (BBTV).